The sequence spans 215 residues: MAKETRFYPYTSNGGATLGVSGPDFAILAGDTRSTAGYNINTRYEPKVFTIQDARDRSIVISVIGFAADGRALKERLDAIVAMYKYQHGKNIGLRACAQRVSTMLYEKRFFPYQLQTMVAGIDADGQGAIYYYDPAGCIEKRSHCAAGEASSLMLPFLDSQAPRLQPLSLQTAQQLVRDAYTGATERHIEVGDHLQMLVVTREGVSEQLVDLKKD.

Belongs to the peptidase T1B family.

It is found in the cytoplasm. Its subcellular location is the nucleus. The enzyme catalyses Cleavage of peptide bonds with very broad specificity.. Proteasome subunit beta type-6; part of the inp gene cluster that mediates the biosynthesis of fellutamide B, a mycotoxin that acts as a proteasome inhibitor. In the first step of fellutabmide B biosynthesis inpC activates 3-hydroxydodecanoic acid to generate 3-hydroxydodecanoyl-AMP that is then loaded onto the T0 domain of inpB. The 3-hydroxydodecanoyl-S-phosphopantetheinyl-T0 is sequentially extended with L-Asn and L-Gln by the two CAT modules of inpB. The linear lipodipeptide from inpB is then transferred onto inpA for the addition of the third amino acid, L-Leu. Reductive releasing of the lipotripeptide by the TE domain of inpA produces (2S)-fellutamide B. InpF might be involved in the release and transfer of the lipodipeptide from inpB to inpA. The inp cluster-encoded proteasome subunit inpE confers resistance to internally produced fellutamides. The MFS efflux transporter inpD may contribute to fellutamide resistance as well. This is Proteasome subunit beta inpE (inpE) from Emericella nidulans (strain FGSC A4 / ATCC 38163 / CBS 112.46 / NRRL 194 / M139) (Aspergillus nidulans).